A 456-amino-acid chain; its full sequence is Bifunctional protein GlmU (456 aa).

A pyrophosphorylase region spans residues 1–229 (MSNSAMSVVI…LSEVEGVNNR (229 aa)). Residues 11-14 (LAAG), Lys-25, Gln-76, 81-82 (GT), 103-105 (YGD), Gly-140, Glu-154, Asn-169, and Asn-227 each bind UDP-N-acetyl-alpha-D-glucosamine. Position 105 (Asp-105) interacts with Mg(2+). Position 227 (Asn-227) interacts with Mg(2+). A linker region spans residues 230–250 (LQLSALERVYQREQADRLLLA). Residues 251 to 456 (GVMLLDPARF…SGWQRPVKKK (206 aa)) form an N-acetyltransferase region. UDP-N-acetyl-alpha-D-glucosamine-binding residues include Arg-333 and Lys-351. The active-site Proton acceptor is the His-363. UDP-N-acetyl-alpha-D-glucosamine-binding residues include Tyr-366 and Asn-377. Acetyl-CoA contacts are provided by residues Ala-380, 386-387 (NY), Ser-405, Ala-423, and Arg-440.

This sequence in the N-terminal section; belongs to the N-acetylglucosamine-1-phosphate uridyltransferase family. In the C-terminal section; belongs to the transferase hexapeptide repeat family. In terms of assembly, homotrimer. Mg(2+) is required as a cofactor.

The protein localises to the cytoplasm. It carries out the reaction alpha-D-glucosamine 1-phosphate + acetyl-CoA = N-acetyl-alpha-D-glucosamine 1-phosphate + CoA + H(+). It catalyses the reaction N-acetyl-alpha-D-glucosamine 1-phosphate + UTP + H(+) = UDP-N-acetyl-alpha-D-glucosamine + diphosphate. Its pathway is nucleotide-sugar biosynthesis; UDP-N-acetyl-alpha-D-glucosamine biosynthesis; N-acetyl-alpha-D-glucosamine 1-phosphate from alpha-D-glucosamine 6-phosphate (route II): step 2/2. It participates in nucleotide-sugar biosynthesis; UDP-N-acetyl-alpha-D-glucosamine biosynthesis; UDP-N-acetyl-alpha-D-glucosamine from N-acetyl-alpha-D-glucosamine 1-phosphate: step 1/1. The protein operates within bacterial outer membrane biogenesis; LPS lipid A biosynthesis. Its function is as follows. Catalyzes the last two sequential reactions in the de novo biosynthetic pathway for UDP-N-acetylglucosamine (UDP-GlcNAc). The C-terminal domain catalyzes the transfer of acetyl group from acetyl coenzyme A to glucosamine-1-phosphate (GlcN-1-P) to produce N-acetylglucosamine-1-phosphate (GlcNAc-1-P), which is converted into UDP-GlcNAc by the transfer of uridine 5-monophosphate (from uridine 5-triphosphate), a reaction catalyzed by the N-terminal domain. The sequence is that of Bifunctional protein GlmU from Pectobacterium carotovorum subsp. carotovorum (strain PC1).